The chain runs to 773 residues: Mitogen-activated protein kinase kinase kinase 9 (773 aa).

Residues 1–14 (MKKSSDKSPVRQHD) are compositionally biased toward basic and acidic residues. A disordered region spans residues 1-35 (MKKSSDKSPVRQHDTATQINSDAVSSSTSFTDSDS). Residues 21-35 (SDAVSSSTSFTDSDS) show a composition bias toward low complexity. Ser-79 and Ser-150 each carry phosphoserine. Residues 100–493 (FDKILALMKK…VSNTSPICVS (394 aa)) are regulatory region. Ser-365 bears the Phosphoserine; by MAPK4 mark. The tract at residues 426-455 (EIVRRPSSSSSSENGCDEEEAEDDKVEKEE) is disordered. The span at 440 to 449 (GCDEEEAEDD) shows a compositional bias: acidic residues. The region spanning 501-755 (WQKGQLLRQG…ATELLNHPFV (255 aa)) is the Protein kinase domain. Residues 507-515 (LRQGSFGSV) and Lys-529 contribute to the ATP site. The active-site Proton acceptor is the Asp-624. Ser-768 bears the Phosphoserine mark.

Belongs to the protein kinase superfamily. STE Ser/Thr protein kinase family. MAP kinase kinase kinase subfamily. As to quaternary structure, interacts with MPK4. Phosphorylated by MPK4 upon treatment with flg22. In terms of tissue distribution, expressed at least in rosette leaves (at protein level).

It carries out the reaction L-seryl-[protein] + ATP = O-phospho-L-seryl-[protein] + ADP + H(+). The enzyme catalyses L-threonyl-[protein] + ATP = O-phospho-L-threonyl-[protein] + ADP + H(+). In terms of biological role, triggers SUMM2-mediated immune responses, including cell death and defense responses. Probably inhibited by the MEKK1-MKK1/ MKK2-MPK4 kinase cascade to adjust plant defense. Seems to contribute in transducing external glutamate (L-Glu) signal that elicits large-scale changes in root architecture. This Arabidopsis thaliana (Mouse-ear cress) protein is Mitogen-activated protein kinase kinase kinase 9.